The chain runs to 285 residues: Ribosomal RNA small subunit methyltransferase H (285 aa).

Residues 34–36, Asp-51, Phe-75, Asp-96, and His-103 contribute to the S-adenosyl-L-methionine site; that span reads AGH. Residues 259 to 285 form a disordered region; that stretch reads LVPSEKEAAQNPRARSAKLRAAEKEAP.

It belongs to the methyltransferase superfamily. RsmH family.

The protein resides in the cytoplasm. The enzyme catalyses cytidine(1402) in 16S rRNA + S-adenosyl-L-methionine = N(4)-methylcytidine(1402) in 16S rRNA + S-adenosyl-L-homocysteine + H(+). In terms of biological role, specifically methylates the N4 position of cytidine in position 1402 (C1402) of 16S rRNA. This Thermus thermophilus (strain ATCC 27634 / DSM 579 / HB8) protein is Ribosomal RNA small subunit methyltransferase H.